The sequence spans 89 residues: UPF0335 protein RPC_3979 (89 aa).

Belongs to the UPF0335 family.

In Rhodopseudomonas palustris (strain BisB18), this protein is UPF0335 protein RPC_3979.